Here is a 432-residue protein sequence, read N- to C-terminus: Ribosome biogenesis protein WDR12 homolog (432 aa).

The tract at residues 13–97 (LQIRLVALNK…ESVIEVVYFQ (85 aa)) is ubiquitin-like (UBL) domain. WD repeat units follow at residues 109–146 (LHSDWIKSVRSKDDCILAGSLDGTARIWNMAGEEYAIF), 148–190 (GHES…KSVE), 197–236 (GHTQAVNAVTVNQSKTKICSVSSDKMIKIWSTDCSRKDDD), 265–303 (GHTDGIDAVVWPKEAEIITAGWDHRIKIWDTEVGVNKSD), 305–345 (NVNK…DQTV), 352–392 (SHKN…APLY), and 396–432 (GHEDKVLAVDWSEPQYIVSGGADNRIQIYQREVAQRS).

Belongs to the WD repeat WDR12/YTM1 family.

Its subcellular location is the nucleus. It localises to the nucleolus. It is found in the nucleoplasm. Functionally, required for maturation of ribosomal RNAs and formation of the large ribosomal subunit. The protein is Ribosome biogenesis protein WDR12 homolog of Trichoplax adhaerens (Trichoplax reptans).